Consider the following 182-residue polypeptide: Isopentenyl-diphosphate Delta-isomerase (182 aa).

The Mn(2+) site is built by H25 and H32. Residues L30–M164 enclose the Nudix hydrolase domain. C67 is a catalytic residue. H69 serves as a coordination point for Mn(2+). E87 contributes to the Mg(2+) binding site. Residues E114 and E116 each coordinate Mn(2+). Residue E116 is part of the active site.

The protein belongs to the IPP isomerase type 1 family. In terms of assembly, homodimer. It depends on Mg(2+) as a cofactor. Requires Mn(2+) as cofactor.

It localises to the cytoplasm. The enzyme catalyses isopentenyl diphosphate = dimethylallyl diphosphate. Its pathway is isoprenoid biosynthesis; dimethylallyl diphosphate biosynthesis; dimethylallyl diphosphate from isopentenyl diphosphate: step 1/1. Its function is as follows. Catalyzes the 1,3-allylic rearrangement of the homoallylic substrate isopentenyl (IPP) to its highly electrophilic allylic isomer, dimethylallyl diphosphate (DMAPP). The protein is Isopentenyl-diphosphate Delta-isomerase of Escherichia coli O7:K1 (strain IAI39 / ExPEC).